The primary structure comprises 264 residues: Teichoic acids export ATP-binding protein TagH (264 aa).

The ABC transporter domain maps to 22 to 243; the sequence is ERLKDVIVPF…YEKFLNDFKK (222 aa). 57–64 provides a ligand contact to ATP; the sequence is GINGSGKS.

It belongs to the ABC transporter superfamily. Teichoic acids exporter (TC 3.A.1.104.1) family. The complex is composed of two ATP-binding proteins (TagH) and two transmembrane proteins (TagG).

It localises to the cell membrane. It carries out the reaction ATP + H2O + teichoic acidSide 1 = ADP + phosphate + teichoic acidSide 2.. Functionally, part of the ABC transporter complex TagGH involved in teichoic acids export. Responsible for energy coupling to the transport system. The chain is Teichoic acids export ATP-binding protein TagH from Staphylococcus saprophyticus subsp. saprophyticus (strain ATCC 15305 / DSM 20229 / NCIMB 8711 / NCTC 7292 / S-41).